We begin with the raw amino-acid sequence, 474 residues long: Poly(A) polymerase catalytic subunit (474 aa).

Active-site residues include D193 and D195.

It belongs to the poxviridae poly(A) polymerase catalytic subunit family. As to quaternary structure, heterodimer of a large (catalytic) subunit and a small (regulatory) subunit.

The catalysed reaction is RNA(n) + ATP = RNA(n)-3'-adenine ribonucleotide + diphosphate. Polymerase that creates the 3'-poly(A) tail of mRNA's. The protein is Poly(A) polymerase catalytic subunit (PAPL) of Bos taurus (Bovine).